Consider the following 475-residue polypeptide: Bifunctional protein HldE (475 aa).

The tract at residues 1 to 318 (MKITLPEFEK…ANALYTEQET (318 aa)) is ribokinase. Residue 195 to 198 (NMSE) participates in ATP binding. Asp-264 is an active-site residue. Positions 344-475 (MTNGCFDILH…DIIKTIRERG (132 aa)) are cytidylyltransferase.

In the N-terminal section; belongs to the carbohydrate kinase PfkB family. This sequence in the C-terminal section; belongs to the cytidylyltransferase family. As to quaternary structure, homodimer.

The catalysed reaction is D-glycero-beta-D-manno-heptose 7-phosphate + ATP = D-glycero-beta-D-manno-heptose 1,7-bisphosphate + ADP + H(+). It carries out the reaction D-glycero-beta-D-manno-heptose 1-phosphate + ATP + H(+) = ADP-D-glycero-beta-D-manno-heptose + diphosphate. It functions in the pathway nucleotide-sugar biosynthesis; ADP-L-glycero-beta-D-manno-heptose biosynthesis; ADP-L-glycero-beta-D-manno-heptose from D-glycero-beta-D-manno-heptose 7-phosphate: step 1/4. Its pathway is nucleotide-sugar biosynthesis; ADP-L-glycero-beta-D-manno-heptose biosynthesis; ADP-L-glycero-beta-D-manno-heptose from D-glycero-beta-D-manno-heptose 7-phosphate: step 3/4. Functionally, catalyzes the phosphorylation of D-glycero-D-manno-heptose 7-phosphate at the C-1 position to selectively form D-glycero-beta-D-manno-heptose-1,7-bisphosphate. In terms of biological role, catalyzes the ADP transfer from ATP to D-glycero-beta-D-manno-heptose 1-phosphate, yielding ADP-D-glycero-beta-D-manno-heptose. In Aeromonas hydrophila subsp. hydrophila (strain ATCC 7966 / DSM 30187 / BCRC 13018 / CCUG 14551 / JCM 1027 / KCTC 2358 / NCIMB 9240 / NCTC 8049), this protein is Bifunctional protein HldE.